Here is a 159-residue protein sequence, read N- to C-terminus: Cytochrome c-type biogenesis protein CcmE (159 aa).

The Cytoplasmic portion of the chain corresponds to 1 to 8 (MNPRRKTR). Residues 9–29 (LWVALTVLAGLGLTMALVLYA) form a helical; Signal-anchor for type II membrane protein membrane-spanning segment. At 30–159 (LRANIDLFYT…PPQAYKDNRP (130 aa)) the chain is on the periplasmic side. Histidine 130 and tyrosine 134 together coordinate heme. Residues 130 to 159 (HDENYTPPEVKAAMDANHTRPPQAYKDNRP) form a disordered region.

Belongs to the CcmE/CycJ family.

It is found in the cell inner membrane. Its function is as follows. Heme chaperone required for the biogenesis of c-type cytochromes. Transiently binds heme delivered by CcmC and transfers the heme to apo-cytochromes in a process facilitated by CcmF and CcmH. The protein is Cytochrome c-type biogenesis protein CcmE of Cronobacter sakazakii (strain ATCC BAA-894) (Enterobacter sakazakii).